The sequence spans 376 residues: Putative F-box protein At1g53370 (376 aa).

The F-box domain maps to 22–71 (RNYIDSIPVDLLIDILSRFPPKSIARFYCVSKLWESILRGPDFTELYLTK).

This chain is Putative F-box protein At1g53370, found in Arabidopsis thaliana (Mouse-ear cress).